A 596-amino-acid chain; its full sequence is Alkaline phosphatase 4 (596 aa).

An N-terminal signal peptide occupies residues 1-20 (MHCLVILGFLLGSLVAFSWA). Asp-93 is a Mg(2+) binding site. A Zn(2+)-binding site is contributed by Asp-93. The active-site Phosphoserine intermediate is Ser-144. His-202 and Thr-204 together coordinate Mg(2+). N-linked (GlcNAc...) asparagine glycans are attached at residues Asn-262 and Asn-297. Glu-369 contacts Mg(2+). Positions 374 and 378 each coordinate Zn(2+). Residue Asn-401 is glycosylated (N-linked (GlcNAc...) asparagine). 2 residues coordinate Zn(2+): Asp-415 and His-416. N-linked (GlcNAc...) asparagine glycosylation is found at Asn-464 and Asn-470. His-504 is a binding site for Zn(2+). The cysteines at positions 539 and 550 are disulfide-linked. The span at 548–566 (DSCEDHKDGQKDRPLDKPN) shows a compositional bias: basic and acidic residues. Residues 548-570 (DSCEDHKDGQKDRPLDKPNPKRN) form a disordered region. A lipid anchor (GPI-anchor amidated asparagine) is attached at Asn-570. The chain crosses the membrane as a helical span at residues 571–591 (GATVVGASLIPILTAATAAIL). Positions 571–596 (GATVVGASLIPILTAATAAILRGRGL) are cleaved as a propeptide — removed in mature form.

It belongs to the alkaline phosphatase family. As to quaternary structure, homodimer. Requires Mg(2+) as cofactor. The cofactor is Zn(2+). As to expression, ellipsoid body ring neurons in the adult brain and in the lower Malpighian tubule and ureter.

The protein resides in the cell membrane. It catalyses the reaction a phosphate monoester + H2O = an alcohol + phosphate. Important role in neural and renal epithelial function. In Drosophila melanogaster (Fruit fly), this protein is Alkaline phosphatase 4.